Consider the following 600-residue polypeptide: Alpha pinene synthase, chloroplastic (600 aa).

The disordered stretch occupies residues 1–26; it reads MSSISMHARPLNISAANNHHPSWDRR. Residues 1-31 constitute a chloroplast transit peptide; that stretch reads MSSISMHARPLNISAANNHHPSWDRRVSKPR. Mg(2+) contacts are provided by Asp354, Asp358, Asp498, and Glu506. The DDXXD motif motif lies at 354-358; that stretch reads DDVYD.

Belongs to the terpene synthase family. Tpsa subfamily. Requires Mg(2+) as cofactor. Mn(2+) serves as cofactor. In terms of tissue distribution, barely detectable in leaves.

Its subcellular location is the plastid. It is found in the chloroplast. The catalysed reaction is (2E)-geranyl diphosphate = alpha-pinene + diphosphate. It participates in secondary metabolite biosynthesis; terpenoid biosynthesis. Its function is as follows. Monoterpene synthase involved in the biosynthesis of volatile compounds widely used in aromatherapy and folk medicine, and present in culinary herbs. Mediates the conversion of (2E)-geranyl diphosphate (GPP) into alpha-pinene and, as minor compounds, into alpha-phellandrene, limonene and alpha-terpinolene. The chain is Alpha pinene synthase, chloroplastic from Lavandula stoechas (Butterfly lavender).